The following is a 252-amino-acid chain: Phosphate import ATP-binding protein PstB 2 (252 aa).

The ABC transporter domain maps to 6 to 247 (ISINDLSVYF…PQHKETEDYI (242 aa)). 38–45 (GPSGSGKS) is an ATP binding site.

This sequence belongs to the ABC transporter superfamily. Phosphate importer (TC 3.A.1.7) family. The complex is composed of two ATP-binding proteins (PstB), two transmembrane proteins (PstC and PstA) and a solute-binding protein (PstS).

It localises to the cell membrane. It catalyses the reaction phosphate(out) + ATP + H2O = ADP + 2 phosphate(in) + H(+). Part of the ABC transporter complex PstSACB involved in phosphate import. Responsible for energy coupling to the transport system. In Streptococcus thermophilus (strain CNRZ 1066), this protein is Phosphate import ATP-binding protein PstB 2.